The following is a 486-amino-acid chain: Solute carrier family 2, facilitated glucose transporter member 5 (486 aa).

N-acetylmethionine is present on Met1. The Cytoplasmic portion of the chain corresponds to 1 to 19 (MEQEGQEKKKEGRLTLVLA). The chain crosses the membrane as a helical span at residues 20 to 40 (LRTLIAAFGSSFQYAYNVSVC). Tyr33 contributes to the D-fructose binding site. Residues 41-69 (NSPSELMTEFYNDTYYDRTGELIDEFPLT) are Extracellular-facing. An N-linked (GlcNAc...) asparagine glycan is attached at Asn52. The helical transmembrane segment at 70 to 92 (LLWSVTVSMFPSGGFAGSLLVGP) threads the bilayer. Over 93 to 99 (LVNKFGR) the chain is Cytoplasmic. A helical transmembrane segment spans residues 100-120 (KGALLFNNIFSIVPAILMGCS). At 121-127 (KVARSFE) the chain is on the extracellular side. A helical transmembrane segment spans residues 128 to 150 (LIIISRLLVGICAGVSSNVVPMY). Topologically, residues 151–162 (LGELAPKNLRGA) are cytoplasmic. The chain crosses the membrane as a helical span at residues 163–183 (LGVESQLFITLGILVAQIFGL). Gln168 serves as a coordination point for D-fructose. At 184-192 (RSIRQQKGW) the chain is on the extracellular side. A helical transmembrane segment spans residues 193-211 (PILLGLTGGPAAAACPPFF). The Cytoplasmic segment spans residues 212–274 (PESPRYLLIG…LCAMRGLAWQ (63 aa)). Residues 275-294 (LISVVPLMWQQLSGVNAIYY) traverse the membrane as a helical segment. D-fructose-binding positions include Gln284 and 292–294 (IYY). Residues 295–306 (YDQIYLSPLDTD) are Extracellular-facing. A helical transmembrane segment spans residues 307-327 (TQYYTAATGAVNVLMTVCTVF). At 328–334 (VVESWAR) the chain is on the cytoplasmic side. A helical membrane pass occupies residues 335–355 (LLLLLGFSPLAPTCCVLTAAL). At 356–363 (ALQDTVSW) the chain is on the extracellular side. The chain crosses the membrane as a helical span at residues 364–385 (MPYISIVCIIVYVIGHAIGPAI). His379 contacts D-fructose. The Cytoplasmic portion of the chain corresponds to 386–402 (RSLYTEIFLQSGRPPTW). The chain crosses the membrane as a helical span at residues 403-421 (WGQVHWLSNFTVGLVFPLI). Position 407–408 (407–408 (HW)) interacts with D-fructose. The Extracellular portion of the chain corresponds to 422-426 (QWAGL). Residues 427 to 447 (YSFIIFGVACLSTTVYTFLIV) form a helical membrane-spanning segment. At 448–486 (PETKGKSFIEIIRRFIRMNKVEVSPDREELKDFPPDVSE) the chain is on the cytoplasmic side.

This sequence belongs to the major facilitator superfamily. Sugar transporter (TC 2.A.1.1) family. Glucose transporter subfamily. In terms of tissue distribution, detected in jejunum. Detected at the intestinal brush-border membrane (at protein level). Detected in duodenum, jejunum and kidney.

It is found in the apical cell membrane. It localises to the cell membrane. Its subcellular location is the sarcolemma. The catalysed reaction is D-fructose(out) = D-fructose(in). Functionally, functions as a fructose transporter that has only low activity with other monosaccharides. Can mediate the uptake of deoxyglucose, but with low efficiency. Essential for fructose uptake in the small intestine. Plays a role in the regulation of salt uptake and blood pressure in response to dietary fructose. Required for the development of high blood pressure in response to high dietary fructose intake. In Oryctolagus cuniculus (Rabbit), this protein is Solute carrier family 2, facilitated glucose transporter member 5.